We begin with the raw amino-acid sequence, 513 residues long: Light-independent protochlorophyllide reductase subunit B (513 aa).

Asp-36 is a binding site for [4Fe-4S] cluster. Asp-299 acts as the Proton donor in catalysis. 434-435 lines the substrate pocket; the sequence is GM.

The protein belongs to the ChlB/BchB/BchZ family. Protochlorophyllide reductase is composed of three subunits; ChlL, ChlN and ChlB. Forms a heterotetramer of two ChlB and two ChlN subunits. It depends on [4Fe-4S] cluster as a cofactor.

Its subcellular location is the plastid. It is found in the chloroplast. The enzyme catalyses chlorophyllide a + oxidized 2[4Fe-4S]-[ferredoxin] + 2 ADP + 2 phosphate = protochlorophyllide a + reduced 2[4Fe-4S]-[ferredoxin] + 2 ATP + 2 H2O. The protein operates within porphyrin-containing compound metabolism; chlorophyll biosynthesis (light-independent). Component of the dark-operative protochlorophyllide reductase (DPOR) that uses Mg-ATP and reduced ferredoxin to reduce ring D of protochlorophyllide (Pchlide) to form chlorophyllide a (Chlide). This reaction is light-independent. The NB-protein (ChlN-ChlB) is the catalytic component of the complex. The polypeptide is Light-independent protochlorophyllide reductase subunit B (Zygnema circumcarinatum (Green alga)).